We begin with the raw amino-acid sequence, 509 residues long: Protein disulfide-isomerase (509 aa).

Positions 1–18 are cleaved as a signal peptide; that stretch reads MLRRAVLCLALAVTAGWA. Residues 19–135 enclose the Thioredoxin 1 domain; it reads WAAEEEDNVL…IVNWLKKRTG (117 aa). Active-site nucleophile residues include Cys-54 and Cys-57. Cys-54 and Cys-57 are disulfide-bonded. Lys-223 and Lys-272 each carry N6-succinyllysine. Phosphoserine occurs at positions 332 and 358. In terms of domain architecture, Thioredoxin 2 spans 347–476; that stretch reads FLEGKIKPHL…FKKFLESGGQ (130 aa). Residues Cys-398 and Cys-401 each act as nucleophile in the active site. An intrachain disulfide couples Cys-398 to Cys-401. Phosphoserine is present on Ser-428. The segment at 471 to 509 is disordered; sequence LESGGQDGAGDEDGLEDLEEAEEPDLEEDDDQKAVRDEL. Over residues 479-501 the composition is skewed to acidic residues; sequence AGDEDGLEDLEEAEEPDLEEDDD. Positions 506-509 match the Prevents secretion from ER motif; that stretch reads RDEL.

It belongs to the protein disulfide isomerase family. In terms of assembly, heterodimer; heterodimerizes with the protein microsomal triglyceride transfer MTTP. Homodimer. Monomers and homotetramers may also occur. Interacts with P4HA2, forming a heterotetramer consisting of 2 alpha subunits (P4HA2) and 2 beta (P4HB), where P4HB plays the role of a structural subunit; this tetramer catalyzes the formation of 4-hydroxyproline in collagen. Also constitutes the structural subunit of the microsomal triacylglycerol transfer protein MTTP in mammalian cells. Stabilizes both enzymes and retain them in the ER without contributing to the catalytic activity. Binds UBQLN1. Interacts with ERO1B. Interacts with ILDR2. Interacts with ERN1/IRE1A (via N-terminus); the interaction is enhanced by phosphorylation of P4HB by FAM20C in response to endoplasmic reticulum stress and results in attenuation of ERN1 activity. Phosphorylation of Ser-358 by FAM20C is induced by endoplasmic reticulum stress and results in a functional switch from oxidoreductase to molecular chaperone. It also promotes interaction with ERN1.

It localises to the endoplasmic reticulum. It is found in the endoplasmic reticulum lumen. The protein resides in the melanosome. Its subcellular location is the cell membrane. It catalyses the reaction Catalyzes the rearrangement of -S-S- bonds in proteins.. Functionally, this multifunctional protein catalyzes the formation, breakage and rearrangement of disulfide bonds. At the cell surface, seems to act as a reductase that cleaves disulfide bonds of proteins attached to the cell. May therefore cause structural modifications of exofacial proteins. Inside the cell, seems to form/rearrange disulfide bonds of nascent proteins. At high concentrations and following phosphorylation by FAM20C, functions as a chaperone that inhibits aggregation of misfolded proteins. At low concentrations, facilitates aggregation (anti-chaperone activity). May be involved with other chaperones in the structural modification of the TG precursor in hormone biogenesis. Also acts as a structural subunit of various enzymes such as prolyl 4-hydroxylase and microsomal triacylglycerol transfer protein MTTP. Receptor for LGALS9; the interaction retains P4HB at the cell surface of Th2 T helper cells, increasing disulfide reductase activity at the plasma membrane, altering the plasma membrane redox state and enhancing cell migration. This Oryctolagus cuniculus (Rabbit) protein is Protein disulfide-isomerase (P4HB).